The chain runs to 157 residues: UPF0262 protein RHECIAT_CH0000657 (157 aa).

This sequence belongs to the UPF0262 family.

The sequence is that of UPF0262 protein RHECIAT_CH0000657 from Rhizobium etli (strain CIAT 652).